We begin with the raw amino-acid sequence, 1128 residues long: Major DNA-binding protein (1128 aa).

The required for nuclear localization stretch occupies residues leucine 1104–valine 1128.

It belongs to the herpesviridae major DNA-binding protein family. As to quaternary structure, homooligomers. Forms double-helical filaments necessary for the formation of replication compartments within the host nucleus. Interacts with the origin-binding protein. Interacts with the helicase primase complex; this interaction stimulates primer synthesis activity of the helicase-primase complex. Interacts with the DNA polymerase. Interacts with the alkaline exonuclease; this interaction increases its nuclease processivity.

The protein localises to the virion tegument. It is found in the host nucleus. Functionally, plays several crucial roles in viral infection. Participates in the opening of the viral DNA origin to initiate replication by interacting with the origin-binding protein. May disrupt loops, hairpins and other secondary structures present on ssDNA to reduce and eliminate pausing of viral DNA polymerase at specific sites during elongation. Promotes viral DNA recombination by performing strand-transfer, characterized by the ability to transfer a DNA strand from a linear duplex to a complementary single-stranded DNA circle. Can also catalyze the renaturation of complementary single strands. Additionally, reorganizes the host cell nucleus, leading to the formation of prereplicative sites and replication compartments. This process is driven by the protein which can form double-helical filaments in the absence of DNA. This is Major DNA-binding protein from Epstein-Barr virus (strain GD1) (HHV-4).